The primary structure comprises 108 residues: DNA-binding protein HBbu (108 aa).

The protein belongs to the bacterial histone-like protein family.

Histone-like DNA-binding protein which is capable of wrapping DNA to stabilize it, and thus to prevent its denaturation under extreme environmental conditions. This Borrelia andersonii (Borreliella andersonii) protein is DNA-binding protein HBbu (hbb).